Consider the following 371-residue polypeptide: 4-hydroxy-3-methylbut-2-en-1-yl diphosphate synthase (flavodoxin) (371 aa).

Cys-270, Cys-273, Cys-305, and Glu-312 together coordinate [4Fe-4S] cluster.

This sequence belongs to the IspG family. It depends on [4Fe-4S] cluster as a cofactor.

The enzyme catalyses (2E)-4-hydroxy-3-methylbut-2-enyl diphosphate + oxidized [flavodoxin] + H2O + 2 H(+) = 2-C-methyl-D-erythritol 2,4-cyclic diphosphate + reduced [flavodoxin]. Its pathway is isoprenoid biosynthesis; isopentenyl diphosphate biosynthesis via DXP pathway; isopentenyl diphosphate from 1-deoxy-D-xylulose 5-phosphate: step 5/6. Its function is as follows. Converts 2C-methyl-D-erythritol 2,4-cyclodiphosphate (ME-2,4cPP) into 1-hydroxy-2-methyl-2-(E)-butenyl 4-diphosphate. This chain is 4-hydroxy-3-methylbut-2-en-1-yl diphosphate synthase (flavodoxin), found in Shewanella loihica (strain ATCC BAA-1088 / PV-4).